The chain runs to 142 residues: MKTISANSQTVKRDWYIIDAEGKTLGRMAAEIAHRLRGKHKPEYTPHVDTGDYIVVINAEKVRVTGNKAKDKMYHHHTGYIGGLKSISFEKLIQKAPERTIETAVKGMLPKGPLGRAMFKKLKVYAGESHPHTAQQPQALNV.

It belongs to the universal ribosomal protein uL13 family. In terms of assembly, part of the 50S ribosomal subunit.

In terms of biological role, this protein is one of the early assembly proteins of the 50S ribosomal subunit, although it is not seen to bind rRNA by itself. It is important during the early stages of 50S assembly. The polypeptide is Large ribosomal subunit protein uL13 (Teredinibacter turnerae (strain ATCC 39867 / T7901)).